A 476-amino-acid polypeptide reads, in one-letter code: Serine protease HTRA4 (476 aa).

The N-terminal stretch at 1 to 31 (MIRPQLRTAGLGRCLLPGLLLLLVPVLWAGA) is a signal peptide. The IGFBP N-terminal domain occupies 36–109 (TQPSCPAVCQ…PGFPSTCGCP (74 aa)). Disulfide bonds link cysteine 40-cysteine 66, cysteine 44-cysteine 68, cysteine 49-cysteine 69, cysteine 55-cysteine 72, cysteine 80-cysteine 94, cysteine 88-cysteine 106, cysteine 108-cysteine 127, and cysteine 116-cysteine 152. A Kazal-like domain is found at 88 to 154 (CAPGLQCLQP…VPVQWGNCGD (67 aa)). The interval 202–362 (GSGFIVSEDG…IPSDRVRQFL (161 aa)) is serine protease. Residues histidine 218, aspartate 248, and serine 326 each act as charge relay system in the active site. Residues 383-474 (LQMLSLTVPL…NLLLTVIPET (92 aa)) enclose the PDZ domain.

It belongs to the peptidase S1C family.

The protein localises to the secreted. Its function is as follows. Serine protease. This is Serine protease HTRA4 (HTRA4) from Homo sapiens (Human).